Here is a 223-residue protein sequence, read N- to C-terminus: 2-phospho-L-lactate guanylyltransferase (223 aa).

The protein belongs to the CofC family. As to quaternary structure, homodimer.

The enzyme catalyses (2S)-2-phospholactate + GTP + H(+) = (2S)-lactyl-2-diphospho-5'-guanosine + diphosphate. It functions in the pathway cofactor biosynthesis; coenzyme F420 biosynthesis. Guanylyltransferase that catalyzes the activation of (2S)-2-phospholactate (2-PL) as (2S)-lactyl-2-diphospho-5'-guanosine, via the condensation of 2-PL with GTP. It is involved in the biosynthesis of coenzyme F420, a hydride carrier cofactor. In Methanothermobacter thermautotrophicus (strain ATCC 29096 / DSM 1053 / JCM 10044 / NBRC 100330 / Delta H) (Methanobacterium thermoautotrophicum), this protein is 2-phospho-L-lactate guanylyltransferase.